Here is a 314-residue protein sequence, read N- to C-terminus: Probable cell division protein WhiA (314 aa).

The segment at residues 274 to 308 (SLKELGEMVSTGPISKSGVNHRLRKLNDLADKIRN) is a DNA-binding region (H-T-H motif).

This sequence belongs to the WhiA family.

Its function is as follows. Involved in cell division and chromosome segregation. This chain is Probable cell division protein WhiA, found in Staphylococcus aureus (strain Mu3 / ATCC 700698).